Consider the following 181-residue polypeptide: Inner membrane-spanning protein YciB (181 aa).

The next 5 helical transmembrane spans lie at 10–30 (LIIFFALYKFYDIYVATGALI), 50–70 (MQLITFVMVALFGGMTLALHD), 80–100 (IVYVVFALGLTISQIMGKPAI), 120–140 (WAWVMFFSGCAALNLYVAYHL), and 148–168 (FKVFGLLAATLVFTLLTGGYI).

Belongs to the YciB family.

The protein resides in the cell inner membrane. Functionally, plays a role in cell envelope biogenesis, maintenance of cell envelope integrity and membrane homeostasis. In Vibrio cholerae serotype O1 (strain ATCC 39315 / El Tor Inaba N16961), this protein is Inner membrane-spanning protein YciB.